Consider the following 218-residue polypeptide: Large ribosomal subunit protein uL3 (218 aa).

A disordered region spans residues 126-170 (HGFSRGPMSHGSKNHREPGSTGAGTTPGRIYPGKRMAGRYGGKKR).

This sequence belongs to the universal ribosomal protein uL3 family. Part of the 50S ribosomal subunit. Forms a cluster with proteins L14 and L19.

Functionally, one of the primary rRNA binding proteins, it binds directly near the 3'-end of the 23S rRNA, where it nucleates assembly of the 50S subunit. The polypeptide is Large ribosomal subunit protein uL3 (Prochlorococcus marinus (strain MIT 9313)).